The following is a 132-amino-acid chain: D-ribose pyranase (132 aa).

Histidine 20 acts as the Proton donor in catalysis. Residues aspartate 28, histidine 99, and 121–123 (YSN) contribute to the substrate site.

The protein belongs to the RbsD / FucU family. RbsD subfamily. As to quaternary structure, homodecamer.

The protein localises to the cytoplasm. It carries out the reaction beta-D-ribopyranose = beta-D-ribofuranose. The protein operates within carbohydrate metabolism; D-ribose degradation; D-ribose 5-phosphate from beta-D-ribopyranose: step 1/2. Its function is as follows. Catalyzes the interconversion of beta-pyran and beta-furan forms of D-ribose. This chain is D-ribose pyranase, found in Pseudomonas putida (strain GB-1).